The sequence spans 484 residues: Pheophytinase, chloroplastic (484 aa).

The N-terminal 47 residues, 1-47 (MEIISLNVVPQCSVVTWSSKLATKRLVPNRSSLLFSGVKKSRLVIRS), are a transit peptide targeting the chloroplast.

Belongs to the AB hydrolase superfamily. In terms of assembly, interacts with HCAR, RCCR, PAO and the LHCII complex. Part of a SGR1-CCE-LHCII complex, which acts in chlorophyll breakdown.

Its subcellular location is the plastid. The protein localises to the chloroplast thylakoid membrane. It localises to the chloroplast stroma. Its function is as follows. Alpha/beta hydrolase dephytylating specifically the Mg-free chlorophyll pigment (pheophytin), yielding pheophorbide. No activity on chlorophyll. Belongs to the chlorophyll catabolic enzymes (CCEs). In Arabidopsis thaliana (Mouse-ear cress), this protein is Pheophytinase, chloroplastic (PPH).